The sequence spans 270 residues: UPF0354 protein Bcer98_3354 (270 aa).

Belongs to the UPF0354 family.

The polypeptide is UPF0354 protein Bcer98_3354 (Bacillus cytotoxicus (strain DSM 22905 / CIP 110041 / 391-98 / NVH 391-98)).